The primary structure comprises 479 residues: Acyltransferase easC (479 aa).

Catalysis depends on H161, which acts as the Proton acceptor.

Belongs to the plant acyltransferase family. As to quaternary structure, monomer.

It functions in the pathway antibiotic biosynthesis. In terms of biological role, acyltransferase; part of the gene cluster that mediates the biosynthesis of emericellamides, secondary metabolites acting as antibiotics. The biosynthesis of emericellamides initiates from the highly reducing polyketide synthase easB which catalyzes the formation of the linear polyketide chain. EasB produces several polyketides that can be further processed by the downstream enzymes. The polyketides are released from easB as linear polyketide carboxylic acids, which are converted to CoA thioesters by the acyl-CoA ligase easD. The substrates are then loaded onto the acyltransferase easC, which shuttles them to the first thiolation (T) domain of the nonribosomal peptide synthetase easA. EasA then performs condensation of the polyketides with one glycine, two alanine, one valine and one leucine residues. A last step of cyclization leads to the production of emericellamides. This Emericella nidulans (strain FGSC A4 / ATCC 38163 / CBS 112.46 / NRRL 194 / M139) (Aspergillus nidulans) protein is Acyltransferase easC.